A 156-amino-acid chain; its full sequence is Small ribosomal subunit protein uS7 (156 aa).

The protein belongs to the universal ribosomal protein uS7 family. As to quaternary structure, part of the 30S ribosomal subunit. Contacts proteins S9 and S11.

Its function is as follows. One of the primary rRNA binding proteins, it binds directly to 16S rRNA where it nucleates assembly of the head domain of the 30S subunit. Is located at the subunit interface close to the decoding center, probably blocks exit of the E-site tRNA. This Nitrosomonas eutropha (strain DSM 101675 / C91 / Nm57) protein is Small ribosomal subunit protein uS7.